The chain runs to 346 residues: 4-hydroxy-3-methylbut-2-enyl diphosphate reductase (346 aa).

Cys-19 contributes to the [4Fe-4S] cluster binding site. (2E)-4-hydroxy-3-methylbut-2-enyl diphosphate contacts are provided by His-48 and His-84. Residues His-48 and His-84 each coordinate dimethylallyl diphosphate. Residues His-48 and His-84 each contribute to the isopentenyl diphosphate site. Residue Cys-106 coordinates [4Fe-4S] cluster. His-134 serves as a coordination point for (2E)-4-hydroxy-3-methylbut-2-enyl diphosphate. Position 134 (His-134) interacts with dimethylallyl diphosphate. Isopentenyl diphosphate is bound at residue His-134. Glu-136 functions as the Proton donor in the catalytic mechanism. Thr-175 is a (2E)-4-hydroxy-3-methylbut-2-enyl diphosphate binding site. [4Fe-4S] cluster is bound at residue Cys-205. Positions 233, 234, 235, and 278 each coordinate (2E)-4-hydroxy-3-methylbut-2-enyl diphosphate. 4 residues coordinate dimethylallyl diphosphate: Ser-233, Ser-234, Asn-235, and Ser-278. Isopentenyl diphosphate is bound by residues Ser-233, Ser-234, Asn-235, and Ser-278.

Belongs to the IspH family. [4Fe-4S] cluster is required as a cofactor.

The catalysed reaction is isopentenyl diphosphate + 2 oxidized [2Fe-2S]-[ferredoxin] + H2O = (2E)-4-hydroxy-3-methylbut-2-enyl diphosphate + 2 reduced [2Fe-2S]-[ferredoxin] + 2 H(+). It catalyses the reaction dimethylallyl diphosphate + 2 oxidized [2Fe-2S]-[ferredoxin] + H2O = (2E)-4-hydroxy-3-methylbut-2-enyl diphosphate + 2 reduced [2Fe-2S]-[ferredoxin] + 2 H(+). The protein operates within isoprenoid biosynthesis; dimethylallyl diphosphate biosynthesis; dimethylallyl diphosphate from (2E)-4-hydroxy-3-methylbutenyl diphosphate: step 1/1. Its pathway is isoprenoid biosynthesis; isopentenyl diphosphate biosynthesis via DXP pathway; isopentenyl diphosphate from 1-deoxy-D-xylulose 5-phosphate: step 6/6. Its function is as follows. Catalyzes the conversion of 1-hydroxy-2-methyl-2-(E)-butenyl 4-diphosphate (HMBPP) into a mixture of isopentenyl diphosphate (IPP) and dimethylallyl diphosphate (DMAPP). Acts in the terminal step of the DOXP/MEP pathway for isoprenoid precursor biosynthesis. This chain is 4-hydroxy-3-methylbut-2-enyl diphosphate reductase, found in Brucella melitensis biotype 1 (strain ATCC 23456 / CCUG 17765 / NCTC 10094 / 16M).